We begin with the raw amino-acid sequence, 648 residues long: PAN2-PAN3 deadenylation complex subunit PAN3 (648 aa).

Positions 1–24 are disordered; that stretch reads MAATRYPPNDLRRQVGSPRSKGRE. Residues 24-53 form a C3H1-type zinc finger; sequence ENKDTLCRNILIYGNCRYEDQGCTFNHDQN. The tract at residues 244-506 is pseudokinase domain; sequence QVMPNSGLPQ…SIENFISGIA (263 aa). Residues R295, 345–352, and 404–405 contribute to the ATP site; these read DYHPLSKT and SK. A coiled-coil region spans residues 507–545; it reads THMTAFFDLALQDGDEKQFHLARELENGRIARSMMKLMT. A knob domain region spans residues 546–648; that stretch reads IIERAEPGGA…SKTGAPGANN (103 aa).

The protein belongs to the protein kinase superfamily. PAN3 family. As to quaternary structure, homodimer. Forms a heterotrimer with a catalytic subunit PAN2 to form the poly(A)-nuclease (PAN) deadenylation complex. Interacts (via PAM-2 motif) with poly(A)-binding protein PAB1 (via PABC domain), conferring substrate specificity of the enzyme complex.

The protein resides in the cytoplasm. Regulatory subunit of the poly(A)-nuclease (PAN) deadenylation complex, one of two cytoplasmic mRNA deadenylases involved in mRNA turnover. PAN specifically shortens poly(A) tails of RNA and the activity is stimulated by poly(A)-binding protein PAB1. PAN deadenylation is followed by rapid degradation of the shortened mRNA tails by the CCR4-NOT complex. Deadenylated mRNAs are then degraded by two alternative mechanisms, namely exosome-mediated 3'-5' exonucleolytic degradation, or deadenylation-dependent mRNA decaping and subsequent 5'-3' exonucleolytic degradation by XRN1. May also be involved in post-transcriptional maturation of mRNA poly(A) tails. PAN3 acts as a positive regulator for PAN activity, recruiting the catalytic subunit PAN2 to mRNA via its interaction with RNA and with PAB1. The polypeptide is PAN2-PAN3 deadenylation complex subunit PAN3 (Chaetomium globosum (strain ATCC 6205 / CBS 148.51 / DSM 1962 / NBRC 6347 / NRRL 1970) (Soil fungus)).